The primary structure comprises 375 residues: CD2 homolog (375 aa).

An N-terminal signal peptide occupies residues 1–16 (MIIILIFLIIPNIVLS). At 17-207 (IDYWVSFNKT…YLDFFQVASY (191 aa)) the chain is on the extracellular side. N-linked (GlcNAc...) asparagine; by host glycosylation is found at Asn24, Asn80, Asn105, Asn122, Asn134, Asn145, Asn168, Asn176, and Asn183. 2 cysteine pairs are disulfide-bonded: Cys123–Cys190 and Cys130–Cys173. Residues 208-228 (MFYMIIFIATGIIASIFISII) form a helical membrane-spanning segment. The Cytoplasmic segment spans residues 229-375 (TFLSLRKRKK…ISLIHVDRII (147 aa)). The interval 242–278 (EIESPSPSESNEEEQCQHDDTTSIHEPSPREPLLPKP) is disordered. Basic and acidic residues predominate over residues 256 to 270 (QCQHDDTTSIHEPSP). 5 consecutive repeat copies span residues 305-310 (KLCPPP), 311-316 (KPCPPP), 317-322 (KPCPPP), 323-328 (KPCPPP), and 329-334 (KPCPSS). A 5 X 6 AA tandem repeats of K-[LP]-C-[PRS]-[PS]-[PS] region spans residues 305–334 (KLCPPPKPCPPPKPCPPPKPCPPPKPCPSS). Residues 323-350 (KPCPPPKPCPSSESCSPPESYSLPKPLP) form a disordered region. Residues 332–346 (PSSESCSPPESYSLP) show a composition bias toward low complexity.

This sequence belongs to the asfivirus CD2 homolog protein family. In terms of assembly, both glycosylated and nonglycosylated forms interact (via C-terminus) with the host AP-1 complex. In terms of processing, cleaved into two fragments of 63 kDa and 26 kDa containing respectively the glycosylated N-terminus and the nonglycosylated C-terminus. A full-length 89-kDa glycosylated form also exists.

It is found in the host membrane. The protein resides in the virion membrane. The protein localises to the host Golgi apparatus. May play an immunosuppressive role by inhibiting lymphocyte proliferation and subsequently facilitating viral replication and generalization of infection. Responsible for viral hemadsorption, which may help viral spread. Increases virus replication in the tick vector at the step of virus uptake or replication in the tick gut. May play a role in the host Golgi reorganization to yield viral factories. May play a role in host cell penetration. This chain is CD2 homolog, found in Ornithodoros (relapsing fever ticks).